Consider the following 62-residue polypeptide: Synergistic-type venom protein S2C4 (62 aa).

Cystine bridges form between cysteine 3/cysteine 24, cysteine 17/cysteine 42, and cysteine 46/cysteine 57.

The protein belongs to the three-finger toxin family. Short-chain subfamily. Aminergic toxin sub-subfamily. In terms of assembly, homodimer; disulfide-linked. Expressed by the venom gland.

The protein resides in the secreted. Functionally, this protein shows a synergetic toxic effect in that it enhances the toxicity of other toxins. The sequence is that of Synergistic-type venom protein S2C4 from Dendroaspis jamesoni kaimosae (Eastern Jameson's mamba).